A 268-amino-acid chain; its full sequence is GTP cyclohydrolase FolE2 (268 aa).

This sequence belongs to the GTP cyclohydrolase IV family.

It carries out the reaction GTP + H2O = 7,8-dihydroneopterin 3'-triphosphate + formate + H(+). It participates in cofactor biosynthesis; 7,8-dihydroneopterin triphosphate biosynthesis; 7,8-dihydroneopterin triphosphate from GTP: step 1/1. Converts GTP to 7,8-dihydroneopterin triphosphate. The chain is GTP cyclohydrolase FolE2 from Methylococcus capsulatus (strain ATCC 33009 / NCIMB 11132 / Bath).